Here is a 657-residue protein sequence, read N- to C-terminus: Methyl-accepting chemotaxis protein CtpL (657 aa).

The Cytoplasmic portion of the chain corresponds to 1 to 5 (MRLKQ). Residues 6–26 (LTNLNTLLLLTVCLALGITLW) traverse the membrane as a helical segment. Over 27–305 (WSQRAMERPF…ERQRLQGQVR (279 aa)) the chain is Periplasmic. Residues 306-326 (LIQGGMIALILLIALAIDSLQ) traverse the membrane as a helical segment. In terms of domain architecture, HAMP spans 327 to 380 (RRLARVLGQLVPALSAWADGDFSRPISLRTRTEDLRNLEDSLNRLRSFLAELVG). At 327–657 (RRLARVLGQL…LRTTVQAFRL (331 aa)) the chain is on the cytoplasmic side. The region spanning 385–621 (RAEQVAGSSQ…EIRSHSERIH (237 aa)) is the Methyl-accepting transducer domain.

This sequence belongs to the methyl-accepting chemotaxis (MCP) protein family.

The protein localises to the cell inner membrane. Chemotactic-signal transducers respond to changes in the concentration of attractants and repellents in the environment, transduce a signal from the outside to the inside of the cell, and facilitate sensory adaptation through the variation of the level of methylation. Chemoreceptor for inorganic phosphate, which is required for taxis at low concentrations of phosphate. Is also responsible for the positive chemotaxis toward 4-chloroaniline (4CA) and catechol. Does not recognize inorganic phosphate directly, but via a complex between the periplasmic protein PstS and inorganic phosphate. This chain is Methyl-accepting chemotaxis protein CtpL, found in Pseudomonas aeruginosa (strain ATCC 15692 / DSM 22644 / CIP 104116 / JCM 14847 / LMG 12228 / 1C / PRS 101 / PAO1).